Here is a 265-residue protein sequence, read N- to C-terminus: RWD domain-containing protein 3 (265 aa).

The 108-residue stretch at 7–114 (EEVAALSAIY…WTQQNLNNLI (108 aa)) folds into the RWD domain.

The protein localises to the nucleus. It is found in the cytoplasm. Functionally, enhancer of SUMO conjugation. Increases SUMO conjugation to proteins by promoting the: binding of E1 and E2 enzymes, thioester linkage between SUMO and ube2i/ubc9 and transfer of SUMO to specific target proteins which include hif1a, pias, nfkbia, nr3c1 and top1. Has no effect on ubiquitination. The protein is RWD domain-containing protein 3 (rwdd3) of Xenopus tropicalis (Western clawed frog).